Reading from the N-terminus, the 427-residue chain is Trigger factor (427 aa).

The 86-residue stretch at 163–248 folds into the PPIase FKBP-type domain; sequence GDTAVIDFEG…VHEIKAKELP (86 aa).

It belongs to the FKBP-type PPIase family. Tig subfamily.

It is found in the cytoplasm. The catalysed reaction is [protein]-peptidylproline (omega=180) = [protein]-peptidylproline (omega=0). Involved in protein export. Acts as a chaperone by maintaining the newly synthesized protein in an open conformation. Functions as a peptidyl-prolyl cis-trans isomerase. The sequence is that of Trigger factor from Bacillus cytotoxicus (strain DSM 22905 / CIP 110041 / 391-98 / NVH 391-98).